The sequence spans 334 residues: Glyoxylate reductase (334 aa).

NADP(+)-binding positions include 158–161 (LGRI), 180–182 (SRT), and 239–241 (IAR). Active-site residues include R241 and E270. The Proton donor role is filled by H288. Residue 288-290 (HIG) coordinates NADP(+).

Belongs to the D-isomer specific 2-hydroxyacid dehydrogenase family. GyaR subfamily. In terms of assembly, homodimer.

It is found in the cytoplasm. The catalysed reaction is glycolate + NAD(+) = glyoxylate + NADH + H(+). This Pyrococcus horikoshii (strain ATCC 700860 / DSM 12428 / JCM 9974 / NBRC 100139 / OT-3) protein is Glyoxylate reductase (gyaR).